A 90-amino-acid polypeptide reads, in one-letter code: Large ribosomal subunit protein bL27 (90 aa).

It belongs to the bacterial ribosomal protein bL27 family.

The polypeptide is Large ribosomal subunit protein bL27 (Paracoccus denitrificans (strain Pd 1222)).